The following is a 146-amino-acid chain: MQAKHQRLILGIIALAAVIAAGFLALVAFKKQAAYFFTPTDAVKAHLPANRNIRLGGMVERGSLIREKDGVTIHFRVTDGYQKIAVSYRGIVPDLFREGSGVVADGHFDPSGSFTAETILAKHDERYMPPVTQQQAAATQTTLQEK.

The Cytoplasmic segment spans residues 1-7 (MQAKHQR). A helical; Signal-anchor for type II membrane protein membrane pass occupies residues 8–28 (LILGIIALAAVIAAGFLALVA). The Periplasmic segment spans residues 29–146 (FKKQAAYFFT…AATQTTLQEK (118 aa)). 2 residues coordinate heme: His123 and Tyr127.

This sequence belongs to the CcmE/CycJ family.

Its subcellular location is the cell inner membrane. Heme chaperone required for the biogenesis of c-type cytochromes. Transiently binds heme delivered by CcmC and transfers the heme to apo-cytochromes in a process facilitated by CcmF and CcmH. The sequence is that of Cytochrome c-type biogenesis protein CcmE from Zymomonas mobilis subsp. mobilis (strain ATCC 31821 / ZM4 / CP4).